The primary structure comprises 789 residues: Phenylalanine--tRNA ligase beta subunit (789 aa).

Residues 38–151 enclose the tRNA-binding domain; sequence KKHLQSFVVV…NTYNVGESFF (114 aa). Residues 398 to 474 form the B5 domain; the sequence is HNDILLNFSP…RLYGYDKILE (77 aa). 4 residues coordinate Mg(2+): Asp452, Asp458, Glu461, and Glu462. One can recognise an FDX-ACB domain in the interval 694–787; sequence LRYQSVKRDF…ISKGFNGILR (94 aa).

This sequence belongs to the phenylalanyl-tRNA synthetase beta subunit family. Type 1 subfamily. As to quaternary structure, tetramer of two alpha and two beta subunits. The cofactor is Mg(2+).

It is found in the cytoplasm. The catalysed reaction is tRNA(Phe) + L-phenylalanine + ATP = L-phenylalanyl-tRNA(Phe) + AMP + diphosphate + H(+). This Ehrlichia ruminantium (strain Welgevonden) protein is Phenylalanine--tRNA ligase beta subunit.